A 278-amino-acid chain; its full sequence is 4-deoxy-L-threo-5-hexosulose-uronate ketol-isomerase (278 aa).

Residues histidine 196, histidine 198, glutamate 203, and histidine 245 each coordinate Zn(2+).

It belongs to the KduI family. Homohexamer. Zn(2+) serves as cofactor.

The catalysed reaction is 5-dehydro-4-deoxy-D-glucuronate = 3-deoxy-D-glycero-2,5-hexodiulosonate. It functions in the pathway glycan metabolism; pectin degradation; 2-dehydro-3-deoxy-D-gluconate from pectin: step 4/5. Its function is as follows. Catalyzes the isomerization of 5-dehydro-4-deoxy-D-glucuronate to 3-deoxy-D-glycero-2,5-hexodiulosonate. The sequence is that of 4-deoxy-L-threo-5-hexosulose-uronate ketol-isomerase from Escherichia coli O139:H28 (strain E24377A / ETEC).